The primary structure comprises 205 residues: Cerebellin-3 (205 aa).

Residues 1 to 32 (MLGTKRHWPPGPSLSLELPLALTLLALRAGWA) form the signal peptide. The C1q domain occupies 67–205 (APPGRVAFAA…SFSGFLIFPL (139 aa)). N90 carries an N-linked (GlcNAc...) asparagine glycan.

As to quaternary structure, heterohexamer; disulfide-linked heterotrimers. Interacts with CBLN1. May also form oligomers with CBLN2 and CBLN4.

The protein resides in the endoplasmic reticulum. The protein localises to the golgi apparatus. Its subcellular location is the cis-Golgi network. It is found in the secreted. It localises to the synapse. Functionally, may be involved in synaptic functions in the CNS. The protein is Cerebellin-3 (CBLN3) of Bos taurus (Bovine).